Here is a 133-residue protein sequence, read N- to C-terminus: Ribosome-binding factor A (133 aa).

Belongs to the RbfA family. As to quaternary structure, monomer. Binds 30S ribosomal subunits, but not 50S ribosomal subunits or 70S ribosomes.

The protein localises to the cytoplasm. Its function is as follows. One of several proteins that assist in the late maturation steps of the functional core of the 30S ribosomal subunit. Associates with free 30S ribosomal subunits (but not with 30S subunits that are part of 70S ribosomes or polysomes). Required for efficient processing of 16S rRNA. May interact with the 5'-terminal helix region of 16S rRNA. In Shigella boydii serotype 18 (strain CDC 3083-94 / BS512), this protein is Ribosome-binding factor A.